Consider the following 631-residue polypeptide: VPS9 domain-containing protein 1 (631 aa).

A Phosphoserine modification is found at Ser-116. Positions Arg-187–Arg-221 form a coiled coil. The interval Pro-318–Ser-379 is disordered. Over residues Pro-337–Ser-362 the composition is skewed to pro residues. Positions Arg-467–Ala-630 constitute a VPS9 domain.

In terms of tissue distribution, ubiquitous.

The chain is VPS9 domain-containing protein 1 (VPS9D1) from Homo sapiens (Human).